The following is a 161-amino-acid chain: Putative pre-16S rRNA nuclease (161 aa).

It belongs to the YqgF nuclease family.

It is found in the cytoplasm. Functionally, could be a nuclease involved in processing of the 5'-end of pre-16S rRNA. This Rhodospirillum rubrum (strain ATCC 11170 / ATH 1.1.1 / DSM 467 / LMG 4362 / NCIMB 8255 / S1) protein is Putative pre-16S rRNA nuclease.